The chain runs to 150 residues: Globin-3 (150 aa).

The Globin domain maps to proline 11 to tyrosine 150. Positions 74 and 106 each coordinate heme b.

This sequence belongs to the globin family. Monomer.

The polypeptide is Globin-3 (Mordacia mordax (Southern hemisphere lamprey)).